Consider the following 373-residue polypeptide: Dual-specificity RNA methyltransferase RlmN (373 aa).

Glu94 (proton acceptor) is an active-site residue. Residues 100–339 (EEDRATLCVS…VIVRKTRGDD (240 aa)) enclose the Radical SAM core domain. Cys107 and Cys344 are joined by a disulfide. Residues Cys114, Cys118, and Cys121 each coordinate [4Fe-4S] cluster. S-adenosyl-L-methionine is bound by residues 168 to 169 (GE), Ser200, 222 to 224 (SIH), and Asn301. The S-methylcysteine intermediate role is filled by Cys344.

Belongs to the radical SAM superfamily. RlmN family. Requires [4Fe-4S] cluster as cofactor.

The protein localises to the cytoplasm. The enzyme catalyses adenosine(2503) in 23S rRNA + 2 reduced [2Fe-2S]-[ferredoxin] + 2 S-adenosyl-L-methionine = 2-methyladenosine(2503) in 23S rRNA + 5'-deoxyadenosine + L-methionine + 2 oxidized [2Fe-2S]-[ferredoxin] + S-adenosyl-L-homocysteine. It carries out the reaction adenosine(37) in tRNA + 2 reduced [2Fe-2S]-[ferredoxin] + 2 S-adenosyl-L-methionine = 2-methyladenosine(37) in tRNA + 5'-deoxyadenosine + L-methionine + 2 oxidized [2Fe-2S]-[ferredoxin] + S-adenosyl-L-homocysteine. Functionally, specifically methylates position 2 of adenine 2503 in 23S rRNA and position 2 of adenine 37 in tRNAs. m2A2503 modification seems to play a crucial role in the proofreading step occurring at the peptidyl transferase center and thus would serve to optimize ribosomal fidelity. The sequence is that of Dual-specificity RNA methyltransferase RlmN from Shewanella loihica (strain ATCC BAA-1088 / PV-4).